The sequence spans 1298 residues: Activating molecule in BECN1-regulated autophagy protein 1 (1298 aa).

The interaction with DDB1 stretch occupies residues 1-22 (MKVVPEKNAVRILWGRERGARA). Lys45 participates in a covalent cross-link: Glycyl lysine isopeptide (Lys-Gly) (interchain with G-Cter in ubiquitin). 3 WD repeats span residues 51-90 (DSPR…CVHS), 93-133 (GHRR…ESWF), and 135-175 (DSNN…AVVK). The residue at position 52 (Ser52) is a Phosphoserine; by MTOR. The span at 254 to 266 (IQVGEQSTVQDSA) shows a compositional bias: polar residues. The tract at residues 254-284 (IQVGEQSTVQDSATPSPPPPPPQPSTERPRT) is disordered. The segment covering 268–277 (PSPPPPPPQP) has biased composition (pro residues). Positions 275-281 (PQPSTER) match the PxP motif 1 motif. Phosphoserine is present on Ser328. The interval 343–413 (FVQTEPFHPP…SRYHREIAPG (71 aa)) is disordered. The segment covering 354-385 (QASSTQQDQGLLNRPSAFSTVQSSTAGNTLRN) has biased composition (polar residues). Phosphoserine is present on residues Ser394 and Ser443. 3 stretches are compositionally biased toward polar residues: residues 458-467 (SQASVYTSAT), 547-561 (HQPT…SNLS), and 590-601 (NYSSGEASSSWQ). 4 disordered regions span residues 458-494 (SQAS…NSGS), 538-561 (IESE…SNLS), 590-690 (NYSS…DSLR), and 747-796 (RYQQ…NARM). Low complexity-rich tracts occupy residues 602–614 (VPSS…SSGS) and 628–639 (SSSRLELSSSAS). Residues Ser635 and Ser639 each carry the phosphoserine modification. Polar residues predominate over residues 661 to 674 (YTQSSRSGTVSQEA). Arg747 is modified (asymmetric dimethylarginine). Over residues 772–781 (TDLEFEDFED) the composition is skewed to acidic residues. Position 1043 is a phosphoserine; by IKKA (Ser1043). An LIR motif is present at residues 1043-1052 (SGVEYYWDQL). Polar residues predominate over residues 1060–1075 (HSNSRSSERPGTSRAT). Residues 1060-1079 (HSNSRSSERPGTSRATWRTD) are disordered. 2 consecutive short sequence motifs (TQT motif) follow at residues 1104–1106 (TQT) and 1116–1118 (TQT). Disordered regions lie at residues 1112–1143 (QNAE…YGAS), 1190–1214 (RSSQ…SRGL), and 1227–1298 (SPRT…PRNR). Positions 1191–1212 (SSQTGTEPGAAHTSSPQPSTSR) are enriched in polar residues. Ser1205 carries the phosphoserine modification. The PxP motif 2 motif lies at 1206–1212 (PQPSTSR).

Belongs to the WD repeat AMBRA1 family. As to quaternary structure, component of the DCX(AMBRA1) E3 ubiquitin ligase complex, also named CRL4(AMBRA1), at least composed of CUL4 (CUL4A or CUL4B), DDB1, AMBRA1 and RBX1. Interacts with BECN1. Probably forms a complex with BECN1 and PIK3C3. Interacts with BECN2. Interacts with BCL2; leading to prevent interaction with BCN1 and autophagy, interaction is disrupted upon autophagy induction. Interacts with ULK1. Interacts (via PxP motifs) with PPP2CA; enhancing interaction between PPP2CA and MYC or FOXO3. Forms a complex with PPP2CA and BECN1; AMBRA1 and BECN1 components of the complex regulate MYC stability via different pathways. Interacts (TQT motifs) with DYNLL1 and DYNLL2; tethering AMBRA1 and the BECN1-PIK3C3 complex in absence of autophagy. Interacts with TRAF6; interaction is required to mediate 'Lys-63'-linked ubiquitination of ULK1. Interacts with TRIM32; promoting activation of ULK1 by TRIM32 via unanchored 'Lys-63'-linked polyubiquitin chains. Interacts with PRKN. Interacts (via LIR motif) with LC3 (MAP1LC3A, MAP1LC3B or MAP1LC3C). Interacts with HUWE1. Interacts with PTK2/FAK. Interacts with SRC; required for SRC trafficking to autophagosomes. In terms of processing, phosphorylation at Ser-52 by MTOR inhibits its ability to regulate autophagy and mediate ubiquitination of ULK1. Phosphorylation by ULK1 in response to autophagy induction abolishes interaction with DYNLL1 and DYNLL2, releasing AMBRA1 from the cytoskeletal docking site to induce autophagosome nucleation. Phosphorylation by MTOR inhibits interaction with PPP2CA and subsequent dephosphorylation of MYC. Phosphorylation at Ser-1043 by CHUK/IKKA promotes its interaction with ATG8 family proteins GABARAP and MAP1LC3B and its mitophagic activity. Ubiquitinated by RNF2 via 'Lys-48'-linkage in unstressed cells, leading to its degradation by the proteasome. Induction of autophagy promotes stabilization via interaction with CUL4 (CUL4A or CUL4B) and DDB1. Upon prolonged starvation, ubiquitinated and degraded, terminating the autophagy response. Post-translationally, undergoes proteolytic processing by caspase-6 (CASP6), caspase-7 (CASP7) and caspase-8 (CASP8) during apoptosis, resulting in the dismantling of the autophagic machinery and the accomplishment of the programmed cell death program. Also cleaved by calpains during apoptosis, which mediate a complete proteolytic degradation.

It is found in the endoplasmic reticulum. The protein resides in the cytoplasm. The protein localises to the cytoskeleton. It localises to the cytoplasmic vesicle. Its subcellular location is the autophagosome. It is found in the mitochondrion. The protein resides in the cytosol. The protein localises to the nucleus. It localises to the cell junction. Its subcellular location is the focal adhesion. The protein operates within protein modification; protein ubiquitination. Its function is as follows. Substrate-recognition component of a DCX (DDB1-CUL4-X-box) E3 ubiquitin-protein ligase complex involved in cell cycle control and autophagy. The DCX(AMBRA1) complex specifically mediates the polyubiquitination of target proteins such as BECN1, CCND1, CCND2, CCND3, ELOC and ULK1. Acts as an upstream master regulator of the transition from G1 to S cell phase: AMBRA1 specifically recognizes and binds phosphorylated cyclin-D (CCND1, CCND2 and CCND3), leading to cyclin-D ubiquitination by the DCX(AMBRA1) complex and subsequent degradation. By controlling the transition from G1 to S phase and cyclin-D degradation, AMBRA1 acts as a tumor suppressor that promotes genomic integrity during DNA replication and counteracts developmental abnormalities and tumor growth. AMBRA1 also regulates the cell cycle by promoting MYC dephosphorylation and degradation independently of the DCX(AMBRA1) complex: acts via interaction with the catalytic subunit of protein phosphatase 2A (PPP2CA), which enhances interaction between PPP2CA and MYC, leading to MYC dephosphorylation and degradation. Acts as a regulator of Cul5-RING (CRL5) E3 ubiquitin-protein ligase complexes by mediating ubiquitination and degradation of Elongin-C (ELOC) component of CRL5 complexes. Acts as a key regulator of autophagy by modulating the BECN1-PIK3C3 complex: controls protein turnover during neuronal development, and regulates normal cell survival and proliferation. In normal conditions, AMBRA1 is tethered to the cytoskeleton via interaction with dyneins DYNLL1 and DYNLL2. Upon autophagy induction, AMBRA1 is released from the cytoskeletal docking site to induce autophagosome nucleation by mediating ubiquitination of proteins involved in autophagy. The DCX(AMBRA1) complex mediates 'Lys-63'-linked ubiquitination of BECN1, increasing the association between BECN1 and PIK3C3 to promote PIK3C3 activity. In collaboration with TRAF6, AMBRA1 mediates 'Lys-63'-linked ubiquitination of ULK1 following autophagy induction, promoting ULK1 stability and kinase activity. Also activates ULK1 via interaction with TRIM32: TRIM32 stimulates ULK1 through unanchored 'Lys-63'-linked polyubiquitin chains. Also acts as an activator of mitophagy via interaction with PRKN and LC3 proteins (MAP1LC3A, MAP1LC3B or MAP1LC3C); possibly by bringing damaged mitochondria onto autophagosomes. Also activates mitophagy by acting as a cofactor for HUWE1; acts by promoting HUWE1-mediated ubiquitination of MFN2. AMBRA1 is also involved in regulatory T-cells (Treg) differentiation by promoting FOXO3 dephosphorylation independently of the DCX(AMBRA1) complex: acts via interaction with PPP2CA, which enhances interaction between PPP2CA and FOXO3, leading to FOXO3 dephosphorylation and stabilization. May act as a regulator of intracellular trafficking, regulating the localization of active PTK2/FAK and SRC. Also involved in transcription regulation by acting as a scaffold for protein complexes at chromatin. The chain is Activating molecule in BECN1-regulated autophagy protein 1 from Homo sapiens (Human).